The chain runs to 200 residues: NADH-quinone oxidoreductase subunit C (200 aa).

This sequence belongs to the complex I 30 kDa subunit family. In terms of assembly, NDH-1 is composed of 14 different subunits. Subunits NuoB, C, D, E, F, and G constitute the peripheral sector of the complex.

It is found in the cell inner membrane. It carries out the reaction a quinone + NADH + 5 H(+)(in) = a quinol + NAD(+) + 4 H(+)(out). In terms of biological role, NDH-1 shuttles electrons from NADH, via FMN and iron-sulfur (Fe-S) centers, to quinones in the respiratory chain. The immediate electron acceptor for the enzyme in this species is believed to be ubiquinone. Couples the redox reaction to proton translocation (for every two electrons transferred, four hydrogen ions are translocated across the cytoplasmic membrane), and thus conserves the redox energy in a proton gradient. The sequence is that of NADH-quinone oxidoreductase subunit C from Rhizobium leguminosarum bv. trifolii (strain WSM2304).